Consider the following 24-residue polypeptide: Caerulein precursor fragment B4 (24 aa).

In terms of tissue distribution, expressed by the skin glands.

Its subcellular location is the secreted. Functionally, has antibacterial and antifungal activity. In Xenopus borealis (Kenyan clawed frog), this protein is Caerulein precursor fragment B4.